Reading from the N-terminus, the 719-residue chain is NF-kappa-B inhibitor zeta (719 aa).

Over residues 46–81 (GACDGGCSASGPSAPGSPGSDSSDFSSASSVSSCGA) the composition is skewed to low complexity. Positions 46-97 (GACDGGCSASGPSAPGSPGSDSSDFSSASSVSSCGAVESRPRGGARAERLQV) are disordered. The span at 84–97 (SRPRGGARAERLQV) shows a compositional bias: basic and acidic residues. The OCA domain maps to 108–130 (RGPFQGVRVKNSVKELLLHIRSH). The Nuclear localization signal motif lies at 164–179 (KRKGSDSLSDGPACKR). Disordered stretches follow at residues 188-210 (LTPPQTPTPAESMEDVHHNESKQ) and 289-343 (YSPQ…FAPL). The span at 201-210 (EDVHHNESKQ) shows a compositional bias: basic and acidic residues. The required for transcriptional activity stretch occupies residues 322-394 (SYEPHLFGRE…LARPDASSTP (73 aa)). The segment at 405 to 719 (GGNPMSTTQL…KSIQQRAPPY (315 aa)) is interaction with NFKB1/p50. ANK repeat units lie at residues 444–473 (DGDTFLHIAVAQGRRALSYVLARKMNALHM), 480–509 (NGQSAFQVAVAANQHLIVQDLVTLGAQVNT), 513–542 (WGRTPLHVCAEKGHSQVLQAIQKGAAGSNQ), 552–581 (DGLTPLHCAVLAHNAVVHELQRNQQPHSPE), 583–608 (QELLLKNKSLVDTIKCLIQMGAAVEA), 613–642 (SGRTALHLAAEEANLELIRLFLELPSCLSF), and 649–682 (NGNTALHVAASLQYRVTQLDAVRLLMRKGADPST).

In terms of assembly, interacts with NFKB1/p50. Interacts with RELA. Interacts with AKIRIN2.

The protein resides in the nucleus. Functionally, involved in regulation of NF-kappa-B transcription factor complexes. Inhibits NF-kappa-B activity without affecting its nuclear translocation upon stimulation. Inhibits DNA-binding of RELA and NFKB1/p50, and of the NF-kappa-B p65-p50 heterodimer and the NF-kappa-B p50-p50 homodimer. Also seems to activate NF-kappa-B-mediated transcription. In vitro, upon association with NFKB1/p50 has transcriptional activation activity and, together with NFKB1/p50 and RELA, is recruited to LCN2 promoters. Promotes transcription of LCN2 and DEFB4. Is recruited to IL-6 promoters and activates IL-6 but decreases TNF-alpha production in response to LPS. Seems to be involved in the induction of inflammatory genes activated through TLR/IL-1 receptor signaling. Involved in the induction of T helper 17 cells (Th17) differentiation upon recognition of antigen by T cell antigen receptor (TCR). The chain is NF-kappa-B inhibitor zeta (NFKBIZ) from Bos taurus (Bovine).